The sequence spans 173 residues: Flagellar biosynthetic protein FliV (173 aa).

The protein belongs to the FliB family.

Required for the secretion of flagellin and expression of motility. The protein is Flagellar biosynthetic protein FliV (fliV) of Salmonella muenchen.